Reading from the N-terminus, the 559-residue chain is Small ribosomal subunit protein bS1 (559 aa).

S1 motif domains are found at residues 21-87 (GSII…LSRE), 105-171 (SETV…VSRR), 192-260 (GIEI…LGLK), 277-347 (GIKL…LGLK), 364-434 (GIHV…LGIK), and 451-520 (GAII…LTFH).

It belongs to the bacterial ribosomal protein bS1 family.

Functionally, binds mRNA; thus facilitating recognition of the initiation point. It is needed to translate mRNA with a short Shine-Dalgarno (SD) purine-rich sequence. The chain is Small ribosomal subunit protein bS1 (rpsA) from Buchnera aphidicola subsp. Schizaphis graminum (strain Sg).